Consider the following 623-residue polypeptide: tRNA uridine 5-carboxymethylaminomethyl modification enzyme MnmG (623 aa).

Position 12 to 17 (12 to 17 (GAGHAG)) interacts with FAD. An NAD(+)-binding site is contributed by 272–286 (GPRYCPSIEDKINRF).

It belongs to the MnmG family. As to quaternary structure, homodimer. Heterotetramer of two MnmE and two MnmG subunits. Requires FAD as cofactor.

It is found in the cytoplasm. Its function is as follows. NAD-binding protein involved in the addition of a carboxymethylaminomethyl (cmnm) group at the wobble position (U34) of certain tRNAs, forming tRNA-cmnm(5)s(2)U34. In Flavobacterium johnsoniae (strain ATCC 17061 / DSM 2064 / JCM 8514 / BCRC 14874 / CCUG 350202 / NBRC 14942 / NCIMB 11054 / UW101) (Cytophaga johnsonae), this protein is tRNA uridine 5-carboxymethylaminomethyl modification enzyme MnmG.